Consider the following 96-residue polypeptide: MSRISIEEVKHVAHLARLAITDEEAAMFTEQLDSIISFAEELNEVDTENVKPTTHVLQMKNIMREDVPDKGLPVEDVVKNAPDHKDGYIRVPSILD.

The protein belongs to the GatC family. In terms of assembly, heterotrimer of A, B and C subunits.

It catalyses the reaction L-glutamyl-tRNA(Gln) + L-glutamine + ATP + H2O = L-glutaminyl-tRNA(Gln) + L-glutamate + ADP + phosphate + H(+). It carries out the reaction L-aspartyl-tRNA(Asn) + L-glutamine + ATP + H2O = L-asparaginyl-tRNA(Asn) + L-glutamate + ADP + phosphate + 2 H(+). Its function is as follows. Allows the formation of correctly charged Asn-tRNA(Asn) or Gln-tRNA(Gln) through the transamidation of misacylated Asp-tRNA(Asn) or Glu-tRNA(Gln) in organisms which lack either or both of asparaginyl-tRNA or glutaminyl-tRNA synthetases. The reaction takes place in the presence of glutamine and ATP through an activated phospho-Asp-tRNA(Asn) or phospho-Glu-tRNA(Gln). The sequence is that of Aspartyl/glutamyl-tRNA(Asn/Gln) amidotransferase subunit C from Bacillus licheniformis (strain ATCC 14580 / DSM 13 / JCM 2505 / CCUG 7422 / NBRC 12200 / NCIMB 9375 / NCTC 10341 / NRRL NRS-1264 / Gibson 46).